The following is a 325-amino-acid chain: Lactonase drp35 (325 aa).

Ca(2+) contacts are provided by Glu46, Thr108, Gly110, Asp128, Thr131, Tyr133, Asp136, Asn183, Asp234, and Ser235. Asp234 acts as the Proton donor in catalysis.

Belongs to the SMP-30/CGR1 family. Requires Ca(2+) as cofactor.

It localises to the cytoplasm. Exhibits lactonase activity. Acts in cells with perturbed membrane integrity and is possibly related to the membrane homeostasis. The sequence is that of Lactonase drp35 (drp35) from Staphylococcus epidermidis (strain ATCC 12228 / FDA PCI 1200).